A 363-amino-acid polypeptide reads, in one-letter code: Cysteine proteinase 15A (363 aa).

The first 18 residues, 1-18 (MDRRFLFALFLFAAVATA), serve as a signal peptide directing secretion. Residues 19–131 (VTDDTNNDDF…QKAPILPTTN (113 aa)) constitute a propeptide, activation peptide. Disulfide bonds link C153–C203 and C187–C236. Residue C156 is part of the active site. N249 is a glycosylation site (N-linked (GlcNAc...) asparagine). Residues C292 and C347 are joined by a disulfide bond. Active-site residues include H299 and N326.

The protein belongs to the peptidase C1 family.

This Pisum sativum (Garden pea) protein is Cysteine proteinase 15A.